Reading from the N-terminus, the 141-residue chain is Nucleoside diphosphate kinase (141 aa).

Residues K9, F57, R85, T91, R102, and N112 each coordinate ATP. The active-site Pros-phosphohistidine intermediate is H115.

This sequence belongs to the NDK family. In terms of assembly, homotetramer. Requires Mg(2+) as cofactor.

The protein resides in the cytoplasm. The catalysed reaction is a 2'-deoxyribonucleoside 5'-diphosphate + ATP = a 2'-deoxyribonucleoside 5'-triphosphate + ADP. It catalyses the reaction a ribonucleoside 5'-diphosphate + ATP = a ribonucleoside 5'-triphosphate + ADP. Major role in the synthesis of nucleoside triphosphates other than ATP. The ATP gamma phosphate is transferred to the NDP beta phosphate via a ping-pong mechanism, using a phosphorylated active-site intermediate. This is Nucleoside diphosphate kinase from Chlamydia trachomatis serovar L2 (strain ATCC VR-902B / DSM 19102 / 434/Bu).